A 208-amino-acid polypeptide reads, in one-letter code: Small ribosomal subunit protein uS4 (208 aa).

The S4 RNA-binding domain occupies 98–163; it reads QRLDNVVYRM…NPQITRAIEL (66 aa).

Belongs to the universal ribosomal protein uS4 family. In terms of assembly, part of the 30S ribosomal subunit. Contacts protein S5. The interaction surface between S4 and S5 is involved in control of translational fidelity.

In terms of biological role, one of the primary rRNA binding proteins, it binds directly to 16S rRNA where it nucleates assembly of the body of the 30S subunit. Its function is as follows. With S5 and S12 plays an important role in translational accuracy. This Campylobacter jejuni subsp. jejuni serotype O:6 (strain 81116 / NCTC 11828) protein is Small ribosomal subunit protein uS4.